A 395-amino-acid chain; its full sequence is S-adenosylmethionine synthase (395 aa).

Glu-10 contacts Mg(2+). His-16 lines the ATP pocket. Glu-44 contacts K(+). L-methionine contacts are provided by Glu-57 and Gln-100. ATP is bound by residues 168-170 (DGK), 236-239 (SGRF), 253-254 (RK), Ala-270, Lys-274, and Lys-278. Lys-278 is a binding site for L-methionine.

It belongs to the AdoMet synthase family. Homotetramer. Mn(2+) is required as a cofactor. The cofactor is Mg(2+). It depends on Co(2+) as a cofactor. K(+) serves as cofactor.

The protein localises to the cytoplasm. The catalysed reaction is L-methionine + ATP + H2O = S-adenosyl-L-methionine + phosphate + diphosphate. Its pathway is amino-acid biosynthesis; S-adenosyl-L-methionine biosynthesis; S-adenosyl-L-methionine from L-methionine: step 1/1. In terms of biological role, catalyzes the formation of S-adenosylmethionine from methionine and ATP. The reaction comprises two steps that are both catalyzed by the same enzyme: formation of S-adenosylmethionine (AdoMet) and triphosphate, and subsequent hydrolysis of the triphosphate. In Populus deltoides (Eastern poplar), this protein is S-adenosylmethionine synthase (METK).